The primary structure comprises 235 residues: Type III pantothenate kinase (235 aa).

6 to 13 (DVGNNYIK) is a binding site for ATP. Residues Y81 and 88 to 91 (GTDR) contribute to the substrate site. The active-site Proton acceptor is D90. K(+) is bound at residue D111. T114 contributes to the ATP binding site. T166 is a substrate binding site.

Belongs to the type III pantothenate kinase family. As to quaternary structure, homodimer. The cofactor is NH4(+). K(+) is required as a cofactor.

It localises to the cytoplasm. It catalyses the reaction (R)-pantothenate + ATP = (R)-4'-phosphopantothenate + ADP + H(+). It participates in cofactor biosynthesis; coenzyme A biosynthesis; CoA from (R)-pantothenate: step 1/5. Catalyzes the phosphorylation of pantothenate (Pan), the first step in CoA biosynthesis. In Cytophaga hutchinsonii (strain ATCC 33406 / DSM 1761 / CIP 103989 / NBRC 15051 / NCIMB 9469 / D465), this protein is Type III pantothenate kinase.